The primary structure comprises 149 residues: Large ribosomal subunit protein bL9 (149 aa).

Belongs to the bacterial ribosomal protein bL9 family.

Binds to the 23S rRNA. In Fusobacterium nucleatum subsp. nucleatum (strain ATCC 25586 / DSM 15643 / BCRC 10681 / CIP 101130 / JCM 8532 / KCTC 2640 / LMG 13131 / VPI 4355), this protein is Large ribosomal subunit protein bL9.